We begin with the raw amino-acid sequence, 366 residues long: MITLQRTPLFDVYAKYGGKTIDFGGWELPVQFSSIKEEHEAVRTAAGLFDVSHMGEVEVKGVDSLAFLQRVVTNDVSTLKVGGAQYTAMCYENGGTVDDLLIYKRGEEDYLLVINASNIEKDYEWLASHVIGDATVVNVSSEVAQLAIQGPKAEGILQKVVSEDLKEIKFFKFKNDILVDGIPALVSRTGYTGEDGFEIYCKSEDAAKLWEKLLEVGAEEGLKACGLGARDTLRFEATLPLYGQELSKDITPIEAGIGFAVKTNKEADFFGKATLKEQKENGAPRKLVGIEVIERGIPRTHYPVFIGEEKIGEVTSGTQSPTLKKSIGLALIDVKYAAVDTEVEIEIRNKRVKAVVVPTPFYKRSK.

Belongs to the GcvT family. The glycine cleavage system is composed of four proteins: P, T, L and H.

The enzyme catalyses N(6)-[(R)-S(8)-aminomethyldihydrolipoyl]-L-lysyl-[protein] + (6S)-5,6,7,8-tetrahydrofolate = N(6)-[(R)-dihydrolipoyl]-L-lysyl-[protein] + (6R)-5,10-methylene-5,6,7,8-tetrahydrofolate + NH4(+). In terms of biological role, the glycine cleavage system catalyzes the degradation of glycine. The polypeptide is Aminomethyltransferase (Bacillus anthracis (strain A0248)).